A 458-amino-acid chain; its full sequence is Peptidyl-prolyl cis-trans isomerase FKBP4 (458 aa).

N-acetylmethionine; in peptidyl-prolyl cis-trans isomerase FKBP4; alternate is present on methionine 1. The tract at residues 1 to 24 is disordered; sequence MTAEEMKAAENGAQSAPLPLEGVD. An N-acetylthreonine; in peptidyl-prolyl cis-trans isomerase FKBP4, N-terminally processed; partial modification is found at threonine 2. The 89-residue stretch at 50–138 folds into the PPIase FKBP-type 1 domain; it reads GDRVFVHYTG…VFEVELFEFK (89 aa). Phosphothreonine; by CK2 is present on threonine 143. Residues 167-253 enclose the PPIase FKBP-type 2 domain; the sequence is GAMVEVALEG…RYEVRLKSFE (87 aa). Residue tyrosine 220 is modified to Phosphotyrosine. Residues 267 to 400 are interaction with tubulin; that stretch reads LEQSNIVKER…TQLAVCQQRT (134 aa). TPR repeat units lie at residues 270-303, 319-352, and 353-386; these read SNIV…LEYE, LASH…DSNN, and EKGL…YPSN. The residue at position 282 (lysine 282) is an N6-acetyllysine. Position 373 is an omega-N-methylarginine (arginine 373). Positions 428 to 458 are disordered; it reads EVAAGDHPTDAEMKGERNNVAENQSRVETEA. Over residues 434–458 the composition is skewed to basic and acidic residues; it reads HPTDAEMKGERNNVAENQSRVETEA. Threonine 436 is subject to Phosphothreonine. Lysine 441 participates in a covalent cross-link: Glycyl lysine isopeptide (Lys-Gly) (interchain with G-Cter in SUMO1). Serine 452 bears the Phosphoserine mark.

In terms of assembly, homodimer. Interacts with GLMN. Associates with HSP90AA1 and HSPA1A/HSPA1B in steroid hormone receptor complexes. Also interacts with peroxisomal phytanoyl-CoA alpha-hydroxylase (PHYH). Interacts with NR3C1 and dynein. Interacts with HSF1 in the HSP90 complex. Associates with tubulin. Interacts with MAPT/TAU. Interacts (via TPR domain) with S100A1, S100A2 and S100A6; the interaction is Ca(2+) dependent. Interaction with S100A1 and S100A2 (but not with S100A6) leads to inhibition of FKBP4-HSP90 interaction. Interacts with dynein; contributes to NR3C1 transport to the nucleus. Phosphorylation by CK2 results in loss of HSP90 binding activity.

The protein localises to the cytoplasm. Its subcellular location is the cytosol. The protein resides in the mitochondrion. It localises to the nucleus. It is found in the cytoskeleton. The catalysed reaction is [protein]-peptidylproline (omega=180) = [protein]-peptidylproline (omega=0). With respect to regulation, inhibited by FK506. Functionally, immunophilin protein with PPIase and co-chaperone activities. Component of steroid receptors heterocomplexes through interaction with heat-shock protein 90 (HSP90). May play a role in the intracellular trafficking of heterooligomeric forms of steroid hormone receptors between cytoplasm and nuclear compartments. The isomerase activity controls neuronal growth cones via regulation of TRPC1 channel opening. Also acts as a regulator of microtubule dynamics by inhibiting MAPT/TAU ability to promote microtubule assembly. May have a protective role against oxidative stress in mitochondria. In Mus musculus (Mouse), this protein is Peptidyl-prolyl cis-trans isomerase FKBP4 (Fkbp4).